A 168-amino-acid chain; its full sequence is Photosystem I assembly protein Ycf3 (168 aa).

TPR repeat units lie at residues 35–68 (AFTY…EIDP), 72–105 (SYIL…NPFL), and 120–153 (GEQA…TPGN).

This sequence belongs to the Ycf3 family.

The protein localises to the plastid. It is found in the chloroplast thylakoid membrane. Essential for the assembly of the photosystem I (PSI) complex. May act as a chaperone-like factor to guide the assembly of the PSI subunits. This chain is Photosystem I assembly protein Ycf3, found in Lemna minor (Common duckweed).